A 101-amino-acid chain; its full sequence is Small ribosomal subunit protein uS14 (101 aa).

The protein belongs to the universal ribosomal protein uS14 family. As to quaternary structure, part of the 30S ribosomal subunit. Contacts proteins S3 and S10.

Functionally, binds 16S rRNA, required for the assembly of 30S particles and may also be responsible for determining the conformation of the 16S rRNA at the A site. This chain is Small ribosomal subunit protein uS14, found in Gluconobacter oxydans (strain 621H) (Gluconobacter suboxydans).